An 87-amino-acid polypeptide reads, in one-letter code: Small ribosomal subunit protein bS20 (87 aa).

Residues 1–27 form a disordered region; sequence MANIKSAKKRAIQSEKRRQHNASRRSM.

This sequence belongs to the bacterial ribosomal protein bS20 family.

In terms of biological role, binds directly to 16S ribosomal RNA. This is Small ribosomal subunit protein bS20 from Aeromonas salmonicida (strain A449).